Here is a 31-residue protein sequence, read N- to C-terminus: Histone H1.3 (31 aa).

This sequence belongs to the histone H1/H5 family.

Its subcellular location is the nucleus. The protein resides in the chromosome. Histones H1 are necessary for the condensation of nucleosome chains into higher-order structures. The chain is Histone H1.3 from Triticum aestivum (Wheat).